The primary structure comprises 357 residues: Thymidine kinase (357 aa).

17 to 24 (GAHGLGKT) is a binding site for ATP. Residue Glu-45 is the Proton acceptor of the active site. Position 186 (Arg-186) interacts with ATP. Residue Arg-192 coordinates substrate.

Belongs to the herpesviridae thymidine kinase family. Homodimer.

It carries out the reaction thymidine + ATP = dTMP + ADP + H(+). Catalyzes the transfer of the gamma-phospho group of ATP to thymidine to generate dTMP in the salvage pathway of pyrimidine synthesis. The dTMP serves as a substrate for DNA polymerase during viral DNA replication. Allows the virus to be reactivated and to grow in non-proliferative cells lacking a high concentration of phosphorylated nucleic acid precursors. This Bovine herpesvirus 1 (strain 6660) (BoHV-1) protein is Thymidine kinase.